Consider the following 251-residue polypeptide: Probable aquaporin TIP4-1 (251 aa).

2 consecutive transmembrane segments (helical) span residues 26–46 (LVLT…AGVP) and 57–77 (ALAG…TAGF). An NPA 1 motif is present at residues 85–87 (NPA). The next 3 membrane-spanning stretches (helical) occupy residues 104–124 (ALYV…LRYL), 144–164 (GLVM…ATIL), and 170–190 (VPGF…IAGG). An NPA 2 motif is present at residues 198-200 (NPA). Residues 219–239 (WLGPLIGGPLAGLVYESLFLV) traverse the membrane as a helical segment.

Belongs to the MIP/aquaporin (TC 1.A.8) family. TIP (TC 1.A.8.10) subfamily. In terms of tissue distribution, expressed in roots, leaves and anthers.

The protein localises to the vacuole membrane. Functionally, aquaporins facilitate the transport of water and small neutral solutes across cell membranes. May be involved in transport from the vacuolar compartment to the cytoplasm. This is Probable aquaporin TIP4-1 (TIP4-1) from Oryza sativa subsp. japonica (Rice).